The primary structure comprises 205 residues: Putative 3-methyladenine DNA glycosylase (205 aa).

It belongs to the DNA glycosylase MPG family.

This is Putative 3-methyladenine DNA glycosylase from Bacillus cereus (strain Q1).